Reading from the N-terminus, the 347-residue chain is Membrane progestin receptor gamma-B (347 aa).

Over 1–52 the chain is Cytoplasmic; sequence MLSLIKLQRVFNVHQVPKAFHEDGIISGYRHPRSSATECVWSLFQLTNETLN. Residues 53–73 form a helical membrane-spanning segment; that stretch reads VWTHFLPTWYFLWKLMTVLLM. Residues 74–81 lie on the Extracellular side of the membrane; the sequence is EDVWNEAY. The helical transmembrane segment at 82–102 threads the bilayer; the sequence is TWPLLVFLFSCCVYPLASSCA. At 103–114 the chain is on the cytoplasmic side; sequence HTFSSMSTRARH. The chain crosses the membrane as a helical span at residues 115–135; it reads ICYFFDYGALSFYSLGSAISY. The Extracellular segment spans residues 136 to 138; it reads SAY. The helical transmembrane segment at 139–159 threads the bilayer; the sequence is VFPDAWLSSSFHAYYISVAVF. Residues 160–201 lie on the Cytoplasmic side of the membrane; it reads NTVLSTSLACYSRLGLPLLHYSHDIVERFSERQCPRMSKVLR. Residues 202–222 form a helical membrane-spanning segment; the sequence is ILAFAYPYLFDNIPLFYRLFV. Topologically, residues 223-235 are extracellular; the sequence is CVGEGCTDNEANS. Residues 236–256 traverse the membrane as a helical segment; the sequence is VHVQHTLLAFLTSFLFATHLP. Topologically, residues 257 to 314 are cytoplasmic; it reads ERLAPGRFDYIGHSHQLFHVCAIIGTHFQMKAIEMDMGLRRSQLLASAPAISFNNTIG. A helical transmembrane segment spans residues 315-335; sequence AALLCVSVSLGIICVYSLPLL. The Extracellular portion of the chain corresponds to 336–347; sequence YSSNPKNTANKE.

The protein belongs to the ADIPOR family.

The protein localises to the membrane. Steroid membrane receptor. Binds progesterone. May be involved in oocyte maturation. The sequence is that of Membrane progestin receptor gamma-B from Danio rerio (Zebrafish).